A 556-amino-acid polypeptide reads, in one-letter code: 2-succinyl-5-enolpyruvyl-6-hydroxy-3-cyclohexene-1-carboxylate synthase (556 aa).

It belongs to the TPP enzyme family. MenD subfamily. Homodimer. Mg(2+) is required as a cofactor. The cofactor is Mn(2+). Requires thiamine diphosphate as cofactor.

It catalyses the reaction isochorismate + 2-oxoglutarate + H(+) = 5-enolpyruvoyl-6-hydroxy-2-succinyl-cyclohex-3-ene-1-carboxylate + CO2. The protein operates within quinol/quinone metabolism; 1,4-dihydroxy-2-naphthoate biosynthesis; 1,4-dihydroxy-2-naphthoate from chorismate: step 2/7. It functions in the pathway quinol/quinone metabolism; menaquinone biosynthesis. Functionally, catalyzes the thiamine diphosphate-dependent decarboxylation of 2-oxoglutarate and the subsequent addition of the resulting succinic semialdehyde-thiamine pyrophosphate anion to isochorismate to yield 2-succinyl-5-enolpyruvyl-6-hydroxy-3-cyclohexene-1-carboxylate (SEPHCHC). This is 2-succinyl-5-enolpyruvyl-6-hydroxy-3-cyclohexene-1-carboxylate synthase from Salmonella agona (strain SL483).